The following is a 308-amino-acid chain: Phosphoribosylaminoimidazole-succinocarboxamide synthase (308 aa).

Belongs to the SAICAR synthetase family.

The catalysed reaction is 5-amino-1-(5-phospho-D-ribosyl)imidazole-4-carboxylate + L-aspartate + ATP = (2S)-2-[5-amino-1-(5-phospho-beta-D-ribosyl)imidazole-4-carboxamido]succinate + ADP + phosphate + 2 H(+). It participates in purine metabolism; IMP biosynthesis via de novo pathway; 5-amino-1-(5-phospho-D-ribosyl)imidazole-4-carboxamide from 5-amino-1-(5-phospho-D-ribosyl)imidazole-4-carboxylate: step 1/2. This chain is Phosphoribosylaminoimidazole-succinocarboxamide synthase, found in Stenotrophomonas maltophilia (strain R551-3).